Here is a 133-residue protein sequence, read N- to C-terminus: Small ribosomal subunit protein uS8 (133 aa).

The protein belongs to the universal ribosomal protein uS8 family. Part of the 30S ribosomal subunit. Contacts proteins S5 and S12.

One of the primary rRNA binding proteins, it binds directly to 16S rRNA central domain where it helps coordinate assembly of the platform of the 30S subunit. The polypeptide is Small ribosomal subunit protein uS8 (Orientia tsutsugamushi (strain Ikeda) (Rickettsia tsutsugamushi)).